The primary structure comprises 299 residues: tRNA-cytidine(32) 2-sulfurtransferase (299 aa).

The PP-loop motif motif lies at 56-61; that stretch reads SGGKDS. C131, C134, and C222 together coordinate [4Fe-4S] cluster.

It belongs to the TtcA family. Homodimer. Requires Mg(2+) as cofactor. It depends on [4Fe-4S] cluster as a cofactor.

It is found in the cytoplasm. The enzyme catalyses cytidine(32) in tRNA + S-sulfanyl-L-cysteinyl-[cysteine desulfurase] + AH2 + ATP = 2-thiocytidine(32) in tRNA + L-cysteinyl-[cysteine desulfurase] + A + AMP + diphosphate + H(+). It participates in tRNA modification. In terms of biological role, catalyzes the ATP-dependent 2-thiolation of cytidine in position 32 of tRNA, to form 2-thiocytidine (s(2)C32). The sulfur atoms are provided by the cysteine/cysteine desulfurase (IscS) system. The protein is tRNA-cytidine(32) 2-sulfurtransferase of Xylella fastidiosa (strain M12).